The following is a 538-amino-acid chain: Probable bifunctional tRNA threonylcarbamoyladenosine biosynthesis protein (538 aa).

Residues 1-327 (MIVLICLGIE…FRTDEVEAPW (327 aa)) are kae1. Fe cation contacts are provided by His111, His115, and Tyr132. L-threonylcarbamoyladenylate is bound by residues 132-136 (YVSGG), Asp164, Gly177, Glu181, and Asn260. Position 288 (Asp288) interacts with Fe cation. The region spanning 336–538 (KLPDNLIAKG…EIESRGRYTH (203 aa)) is the Protein kinase domain. Residues 342-350 (IAKGAESDI) and Lys363 each bind ATP. Asp452 functions as the Proton acceptor; for kinase activity in the catalytic mechanism.

It in the N-terminal section; belongs to the KAE1 / TsaD family. The protein in the C-terminal section; belongs to the protein kinase superfamily. Tyr protein kinase family. BUD32 subfamily. Component of the KEOPS complex that consists of Kae1, Bud32, Cgi121 and Pcc1; the whole complex dimerizes. Fe(2+) serves as cofactor.

It localises to the cytoplasm. It carries out the reaction L-seryl-[protein] + ATP = O-phospho-L-seryl-[protein] + ADP + H(+). The catalysed reaction is L-threonyl-[protein] + ATP = O-phospho-L-threonyl-[protein] + ADP + H(+). The enzyme catalyses L-threonylcarbamoyladenylate + adenosine(37) in tRNA = N(6)-L-threonylcarbamoyladenosine(37) in tRNA + AMP + H(+). Its function is as follows. Required for the formation of a threonylcarbamoyl group on adenosine at position 37 (t(6)A37) in tRNAs that read codons beginning with adenine. Is a component of the KEOPS complex that is probably involved in the transfer of the threonylcarbamoyl moiety of threonylcarbamoyl-AMP (TC-AMP) to the N6 group of A37. The Kae1 domain likely plays a direct catalytic role in this reaction. The Bud32 domain probably displays kinase activity that regulates Kae1 function. The sequence is that of Probable bifunctional tRNA threonylcarbamoyladenosine biosynthesis protein from Methanobrevibacter smithii (strain ATCC 35061 / DSM 861 / OCM 144 / PS).